The sequence spans 599 residues: Elongation factor 4 (599 aa).

Residues 2–184 (KNIRNFSIIA…RLVRDIPPPQ (183 aa)) form the tr-type G domain. GTP is bound by residues 14 to 19 (DHGKST) and 131 to 134 (NKID).

The protein belongs to the TRAFAC class translation factor GTPase superfamily. Classic translation factor GTPase family. LepA subfamily.

The protein resides in the cell inner membrane. The catalysed reaction is GTP + H2O = GDP + phosphate + H(+). Required for accurate and efficient protein synthesis under certain stress conditions. May act as a fidelity factor of the translation reaction, by catalyzing a one-codon backward translocation of tRNAs on improperly translocated ribosomes. Back-translocation proceeds from a post-translocation (POST) complex to a pre-translocation (PRE) complex, thus giving elongation factor G a second chance to translocate the tRNAs correctly. Binds to ribosomes in a GTP-dependent manner. This chain is Elongation factor 4, found in Salmonella paratyphi A (strain ATCC 9150 / SARB42).